Reading from the N-terminus, the 701-residue chain is E3 ubiquitin-protein ligase RNF19B (701 aa).

Residues 1 to 97 (MGSEKDSESP…PAEPLSTSQA (97 aa)) form a disordered region. A required for ubiquitin ligase activity and for protection against staurosporin-induced cell death region spans residues 1–304 (MGSEKDSESP…VCGCEFCWLC (304 aa)). Positions 57-72 (QQLHQQQQIQQQQLLQ) are enriched in low complexity. Positions 103 to 323 (ELLECPLCLV…LSPSGCTFWG (221 aa)) are TRIAD supradomain. Positions 107, 110, 130, 133, 194, 199, 216, 221, 226, 229, 234, 239, 273, and 276 each coordinate Zn(2+). The RING-type 1 zinc finger occupies 107–156 (CPLCLVRQPAEQLPELQGCSHRSCLCCLRQYLRIEITESRVQLSCPECAE). An IBR-type zinc finger spans residues 174–239 (EKYEEFLLRR…KQAWHPNQTC (66 aa)). An RING-type 2; atypical zinc finger spans residues 273–304 (CPRCGAYIIKMNDGSCNHMTCAVCGCEFCWLC). Cys288 is a catalytic residue. Residues Cys293, Cys296, Cys301, Cys304, His312, and Cys319 each contribute to the Zn(2+) site. 2 consecutive transmembrane segments (helical) span residues 340-360 (LIGAPVGITLIAGIAVPAMVI) and 396-416 (IITAPVIAAVSVGIGVPIMLA). 2 disordered regions span residues 472–495 (LEGAASGLSTTSPSEGLSVAPGGL) and 658–677 (AELTSDDCDSPHPKSCHGAP).

Belongs to the RBR family. RNF19 subfamily. In terms of assembly, interacts with UBE2L3, UBE2L6 and UCKL1.

The protein resides in the cytoplasmic granule membrane. Its subcellular location is the endoplasmic reticulum membrane. It catalyses the reaction [E2 ubiquitin-conjugating enzyme]-S-ubiquitinyl-L-cysteine + [acceptor protein]-L-lysine = [E2 ubiquitin-conjugating enzyme]-L-cysteine + [acceptor protein]-N(6)-ubiquitinyl-L-lysine.. It participates in protein modification; protein ubiquitination. In terms of biological role, E3 ubiquitin-protein ligase which accepts ubiquitin from E2 ubiquitin-conjugating enzymes UBE2L3 and UBE2L6 in the form of a thioester and then directly transfers the ubiquitin to targeted substrates, such as UCKL1. Involved in the cytolytic activity of natural killer cells and cytotoxic T-cells. Protects against staurosporin-induced cell death. The polypeptide is E3 ubiquitin-protein ligase RNF19B (rnf19b) (Danio rerio (Zebrafish)).